Consider the following 463-residue polypeptide: NADH dehydrogenase [ubiquinone] iron-sulfur protein 2, mitochondrial (463 aa).

Residues 1–33 (MAALRALCGFRGVAAQVLRPGAGVRLPIQPSRG) constitute a mitochondrion transit peptide. K62 is modified (N6-acetyllysine). R118 carries the symmetric dimethylarginine modification. 3 residues coordinate [4Fe-4S] cluster: C326, C332, and C347.

This sequence belongs to the complex I 49 kDa subunit family. In terms of assembly, core subunit of respiratory chain NADH dehydrogenase (Complex I) which is composed of 45 different subunits. Component of the iron-sulfur (IP) fragment of the enzyme. Interacts with NDUFAF3. Interacts with NDUFAF7. Interacts with CERS2. The cofactor is [4Fe-4S] cluster. Dimethylation at Arg-118 by NDUFAF7 takes place after NDUFS2 assembles into the complex I, leading to stabilize the early intermediate complex.

It is found in the mitochondrion inner membrane. The enzyme catalyses a ubiquinone + NADH + 5 H(+)(in) = a ubiquinol + NAD(+) + 4 H(+)(out). In terms of biological role, core subunit of the mitochondrial membrane respiratory chain NADH dehydrogenase (Complex I) which catalyzes electron transfer from NADH through the respiratory chain, using ubiquinone as an electron acceptor. Essential for the catalytic activity of complex I. Essential for the assembly of complex I. Redox-sensitive, critical component of the oxygen-sensing pathway in the pulmonary vasculature which plays a key role in acute pulmonary oxygen-sensing and hypoxic pulmonary vasoconstriction. Plays an important role in carotid body sensing of hypoxia. Essential for glia-like neural stem and progenitor cell proliferation, differentiation and subsequent oligodendrocyte or neuronal maturation. This is NADH dehydrogenase [ubiquinone] iron-sulfur protein 2, mitochondrial (NDUFS2) from Homo sapiens (Human).